The following is a 570-amino-acid chain: MRKNTIWNYSLIFFCCVLKSISTLDHGPHTVSVDSNRHNTQHQYKQNPNVASQRHSSHESGQSLHNSQSEHVTHIAASHAGSGGEHSTHLAQNLHRSSYNLLSEAMSQAVSNEFSSMGSGSADGACAADDFDCYSGSVQDRFGMEAIASLHRQLDDDDNGNIDLSESDDFLREELKYDSGYEKRQKAFHFNDDMHISVKELWEAWLRSEVHNWTIEQTTDWLAQSVQLPQYVDLFKLHKVTGAALPRLAVNNLQYVGNVLGIKDPIHKQKISLKAMDVVLFGPPRETGTRWKDYILVTLLLSAIIGCWYAYQQNKNAKRHLRRMAQDMEGLQRAEQSLQEMQKELERARMEQENVATEKLDLERRLKEAPTLSSSNSDLEVQQLKKEIEMLRNELSRAEFELVDNCWSPPPQLQSWLQYTYELESKNHQKKRTSAEKQLQSAREACEKLRKKRSSLVGAFVSTHGKSIDDVDRSIVEARNALGDVTNELQERLHRWKQIETCLGLNIVNNNGLPYLENVLYGRNGGLQSSMGMSSTKGSRARITNSTEDLDDESIQGKLNFENFSLLATE.

Positions 1–23 (MRKNTIWNYSLIFFCCVLKSIST) are cleaved as a signal peptide. Residues 24–294 (LDHGPHTVSV…RETGTRWKDY (271 aa)) lie on the Extracellular side of the membrane. The interval 40–71 (TQHQYKQNPNVASQRHSSHESGQSLHNSQSEH) is disordered. Polar residues predominate over residues 41-70 (QHQYKQNPNVASQRHSSHESGQSLHNSQSE). The region spanning 142 to 177 (FGMEAIASLHRQLDDDDNGNIDLSESDDFLREELKY) is the EF-hand domain. D155, D157, N159, N161, and E166 together coordinate Ca(2+). The N-linked (GlcNAc...) asparagine glycan is linked to N212. The region spanning 213 to 281 (WTIEQTTDWL…SLKAMDVVLF (69 aa)) is the SAM domain. A helical membrane pass occupies residues 295-312 (ILVTLLLSAIIGCWYAYQ). Coiled-coil stretches lie at residues 310-407 (AYQQ…DNCW) and 420-462 (TYEL…AFVS). Residues 313-570 (QNKNAKRHLR…FENFSLLATE (258 aa)) are Cytoplasmic-facing. S539 and S546 each carry phosphoserine.

The protein resides in the cell membrane. In terms of biological role, plays a role in mediating Ca(2+) influx following depletion of intracellular Ca(2+) stores. This is Stromal interaction molecule homolog (Stim) from Drosophila melanogaster (Fruit fly).